Reading from the N-terminus, the 130-residue chain is Transcription antitermination protein NusB (130 aa).

Belongs to the NusB family.

Involved in transcription antitermination. Required for transcription of ribosomal RNA (rRNA) genes. Binds specifically to the boxA antiterminator sequence of the ribosomal RNA (rrn) operons. This chain is Transcription antitermination protein NusB, found in Bacillus anthracis (strain A0248).